The primary structure comprises 397 residues: Anhydro-N-acetylmuramic acid kinase (397 aa).

9 to 16 is an ATP binding site; the sequence is GTSYDAID.

The protein belongs to the anhydro-N-acetylmuramic acid kinase family.

The catalysed reaction is 1,6-anhydro-N-acetyl-beta-muramate + ATP + H2O = N-acetyl-D-muramate 6-phosphate + ADP + H(+). The protein operates within amino-sugar metabolism; 1,6-anhydro-N-acetylmuramate degradation. It functions in the pathway cell wall biogenesis; peptidoglycan recycling. Functionally, catalyzes the specific phosphorylation of 1,6-anhydro-N-acetylmuramic acid (anhMurNAc) with the simultaneous cleavage of the 1,6-anhydro ring, generating MurNAc-6-P. Is required for the utilization of anhMurNAc either imported from the medium or derived from its own cell wall murein, and thus plays a role in cell wall recycling. This Rhodococcus erythropolis (strain PR4 / NBRC 100887) protein is Anhydro-N-acetylmuramic acid kinase.